Here is a 302-residue protein sequence, read N- to C-terminus: Glutamyl-Q tRNA(Asp) synthetase (302 aa).

Residues 13–17 (RFAPS) and Asp49 contribute to the L-glutamate site. The 'HIGH' region signature appears at 16-26 (PSPTGPLHLGS). Residues Cys105, Cys107, Tyr119, and Cys123 each contribute to the Zn(2+) site. L-glutamate is bound by residues Tyr178 and Arg196. The short motif at 234-238 (KLSKQ) is the 'KMSKS' region element. Lys237 contributes to the ATP binding site.

Belongs to the class-I aminoacyl-tRNA synthetase family. GluQ subfamily. It depends on Zn(2+) as a cofactor.

Functionally, catalyzes the tRNA-independent activation of glutamate in presence of ATP and the subsequent transfer of glutamate onto a tRNA(Asp). Glutamate is transferred on the 2-amino-5-(4,5-dihydroxy-2-cyclopenten-1-yl) moiety of the queuosine in the wobble position of the QUC anticodon. The protein is Glutamyl-Q tRNA(Asp) synthetase of Methylococcus capsulatus (strain ATCC 33009 / NCIMB 11132 / Bath).